We begin with the raw amino-acid sequence, 368 residues long: Protein mab-21-like (368 aa).

It belongs to the mab-21 family.

This is Protein mab-21-like from Drosophila melanogaster (Fruit fly).